The following is a 626-amino-acid chain: Endoglucanase 19 (626 aa).

A signal peptide spans 1–23 (MGSRTTISILVVLLLGLVQLAIS). D79 (nucleophile) is an active-site residue. Active-site residues include H412, D464, and E473. Positions 515–536 (APVPQRKPTKPPAASSPSPITI) are disordered. A compositionally biased stretch (low complexity) spans 526–536 (PAASSPSPITI). 2 N-linked (GlcNAc...) asparagine glycosylation sites follow: N560 and N622.

This sequence belongs to the glycosyl hydrolase 9 (cellulase E) family.

Its subcellular location is the secreted. It carries out the reaction Endohydrolysis of (1-&gt;4)-beta-D-glucosidic linkages in cellulose, lichenin and cereal beta-D-glucans.. The polypeptide is Endoglucanase 19 (Arabidopsis thaliana (Mouse-ear cress)).